The following is a 90-amino-acid chain: Small ribosomal subunit protein bS16 (90 aa).

It belongs to the bacterial ribosomal protein bS16 family.

The sequence is that of Small ribosomal subunit protein bS16 from Bacillus pumilus (strain SAFR-032).